Reading from the N-terminus, the 104-residue chain is uncharacterized protein (104 aa).

Transmembrane regions (helical) follow at residues 53 to 73 (IWGI…NWDF) and 74 to 94 (ILNL…LILI).

The protein resides in the cell membrane. This is an uncharacterized protein from Methanocaldococcus jannaschii (strain ATCC 43067 / DSM 2661 / JAL-1 / JCM 10045 / NBRC 100440) (Methanococcus jannaschii).